Reading from the N-terminus, the 846-residue chain is MAP7 domain-containing protein 1 (846 aa).

Disordered stretches follow at residues 1 to 153 (MESG…ERAK) and 186 to 210 (EQRLKAEQRRAALEERQRQKLEKNK). A compositionally biased stretch (pro residues) spans 24–41 (EPRPSPEGDPSPPPPPTP). Phosphothreonine occurs at positions 49 and 53. S95 carries the phosphoserine modification. T99 carries the post-translational modification Phosphothreonine. Residues 113–123 (RSSQPSPTTVP) are compositionally biased toward low complexity. Phosphoserine is present on residues S115 and S118. The residue at position 120 (T120) is a Phosphothreonine. 2 positions are modified to phosphoserine: S125 and S127. Positions 130-224 (AKQDVKKAGE…AAIQRSVKKT (95 aa)) form a coiled coil. Basic and acidic residues predominate over residues 132–153 (QDVKKAGERHKLAKERREERAK). Phosphoserine is present on residues S256, S275, S315, S368, and S401. A disordered region spans residues 318–816 (TLPRNGRDQG…KGTAGDKSLG (499 aa)). Over residues 407–437 (RRLEATPVQKKEKKDKERENEKEKSALARER) the composition is skewed to basic and acidic residues. Residues 414-443 (VQKKEKKDKERENEKEKSALARERNLKKRQ) are a coiled coil. 4 positions are modified to phosphoserine: S444, S448, S454, and S460. Over residues 460 to 471 (SPKSKARPSSPS) the composition is skewed to low complexity. A Glycyl lysine isopeptide (Lys-Gly) (interchain with G-Cter in SUMO2) cross-link involves residue K462. Phosphoserine is present on residues S479 and S496. Residues 479–497 (SPCPSPGPGHALPPKPPSP) show a composition bias toward pro residues. Residues 523-539 (PEDKNHRKSRAAEEKEP) are compositionally biased toward basic and acidic residues. The span at 542-556 (PASPAPSPVPSPTPA) shows a compositional bias: pro residues. S544, S548, and S552 each carry phosphoserine. T554 carries the phosphothreonine modification. Residues 568–579 (PAETAVPAVPAA) are compositionally biased toward low complexity. Residues 599–740 (TTDREEATRL…AETKKQDAKE (142 aa)) are a coiled coil. Over residues 600-740 (TDREEATRLL…AETKKQDAKE (141 aa)) the composition is skewed to basic and acidic residues. At T818 the chain carries Phosphothreonine.

The protein belongs to the MAP7 family.

The protein resides in the cytoplasm. It is found in the cytoskeleton. It localises to the spindle. Its subcellular location is the microtubule organizing center. The protein localises to the centrosome. The protein resides in the midbody. In terms of biological role, microtubule-stabilizing protein involved in the control of cell motility and neurite outgrowth. Facilitate microtubule stabilization through the maintenance of acetylated stable microtubules. The chain is MAP7 domain-containing protein 1 (Map7d1) from Mus musculus (Mouse).